Reading from the N-terminus, the 229-residue chain is Peptide methionine sulfoxide reductase B3, chloroplastic (229 aa).

The N-terminal 71 residues, 1-71 (MGVQHLLKLR…NHNQWAASRC (71 aa)), are a transit peptide targeting the chloroplast. Residues 102–223 (EEEWEAILSP…NSISLKFIPA (122 aa)) form the MsrB domain. Zn(2+)-binding residues include Cys-141, Cys-144, Cys-187, and Cys-190. Residues Cys-159 and Cys-212 are joined by a disulfide bond. Residue Cys-212 is the Nucleophile of the active site.

This sequence belongs to the MsrB Met sulfoxide reductase family. Zn(2+) is required as a cofactor.

It localises to the plastid. It is found in the chloroplast. It catalyses the reaction L-methionyl-[protein] + [thioredoxin]-disulfide + H2O = L-methionyl-(R)-S-oxide-[protein] + [thioredoxin]-dithiol. In terms of biological role, catalyzes the reduction of methionine sulfoxide (MetSO) to methionine in proteins. Plays a protective role against oxidative stress by restoring activity to proteins that have been inactivated by methionine oxidation. MSRB family specifically reduces the MetSO R-enantiomer. The polypeptide is Peptide methionine sulfoxide reductase B3, chloroplastic (MSRB3) (Oryza sativa subsp. japonica (Rice)).